We begin with the raw amino-acid sequence, 382 residues long: MKALHFGAGNIGRGFIGKLLADAGIQLTFADVNQVVLDALNARHSYQVHVVGENEQVDTVSGVNAVSSIGDDVVDLIAHVDLITTAVGPVVLERIAPAIAKGLVKRKAQGVDAPLNIIACENMVRGTTQLKGHVMNALADGDKAWVEQHVGFVDSAVDRIVPPSASATNDPLEVTVETFSEWIVDKTQFKGTLPNIPGMELTDNLMAFVERKLFTLNTGHAITAYLGKLAGHQTIRDAILDESIRAVVKGAMEESGAVLIKRYGFDADKHAAYIQKILGRFENPYLKDDVERVGRQPLRKLSAGDRLIKPLLGTLEYGLPHVNLVKGIAAAMHFRSDEDPQAQELAALITEKGPQAALAQISGLDANSDVVAEAVNAYNATK.

Position 3-14 (3-14 (ALHFGAGNIGRG)) interacts with NAD(+).

The protein belongs to the mannitol dehydrogenase family.

The catalysed reaction is D-mannitol 1-phosphate + NAD(+) = beta-D-fructose 6-phosphate + NADH + H(+). This Salmonella agona (strain SL483) protein is Mannitol-1-phosphate 5-dehydrogenase.